Here is a 357-residue protein sequence, read N- to C-terminus: NADH-quinone oxidoreductase subunit H (357 aa).

Transmembrane regions (helical) follow at residues 18–38 (VAWM…PIIL), 92–112 (VLFV…WAVV), 127–147 (LLYI…AGWA), 165–185 (VSYE…SGSL), 206–226 (FLSW…ISAV), 268–288 (ILLS…PIDI), 294–314 (IPGW…FVWF), and 329–349 (LGWK…AIWM).

Belongs to the complex I subunit 1 family. As to quaternary structure, NDH-1 is composed of 14 different subunits. Subunits NuoA, H, J, K, L, M, N constitute the membrane sector of the complex.

It localises to the cell inner membrane. The enzyme catalyses a quinone + NADH + 5 H(+)(in) = a quinol + NAD(+) + 4 H(+)(out). Its function is as follows. NDH-1 shuttles electrons from NADH, via FMN and iron-sulfur (Fe-S) centers, to quinones in the respiratory chain. The immediate electron acceptor for the enzyme in this species is believed to be ubiquinone. Couples the redox reaction to proton translocation (for every two electrons transferred, four hydrogen ions are translocated across the cytoplasmic membrane), and thus conserves the redox energy in a proton gradient. This subunit may bind ubiquinone. This is NADH-quinone oxidoreductase subunit H from Bordetella bronchiseptica (strain ATCC BAA-588 / NCTC 13252 / RB50) (Alcaligenes bronchisepticus).